The primary structure comprises 602 residues: Multicopper oxidase aurL2 (602 aa).

Positions 1–17 (MLFRFLALLPFVAGAFA) are cleaved as a signal peptide. Plastocyanin-like domains follow at residues 38–149 (DIKI…VRDA) and 160–317 (IPLL…KYRC). Asn-52 and Asn-80 each carry an N-linked (GlcNAc...) asparagine glycan. Cu cation is bound by residues His-84, His-86, His-130, and His-132. N-linked (GlcNAc...) asparagine glycans are attached at residues Asn-201, Asn-247, Asn-337, Asn-383, Asn-387, Asn-419, and Asn-424. In terms of domain architecture, Plastocyanin-like 3 spans 421-556 (TTPNYTLALE…QVMGMATVWV (136 aa)). His-469 contacts Cu cation. Residues Asn-482 and Asn-486 are each glycosylated (N-linked (GlcNAc...) asparagine).

Belongs to the multicopper oxidase family.

It participates in pigment biosynthesis. Multicopper oxidase; part of the gene cluster that mediates the biosynthesis of aurofusarin, a red mycelium pigment which is acting as a mycotoxin. The first step is performed by the polyketide synthase which condenses one acetyl-CoA and 6 malonyl-CoA units to form the first intermediate, the cyclic heptaketide and yellow pigment YWA1. The C2 hydroxyl group in the pyrone ring of YWA1 is probably formed during ring closure by an aldol-type cyclization reaction. The dehydratase aurZ then acts as the first tailoring enzyme in the aurofusarin biosynthetic pathway by converting YWA1 to nor-rubrofusarin. Nor-rubrofusarin is then methylated to rubrofusarin by the O-methyltransferase aurJ. Rubrofusarin is then transported across the plasma membrane by the rubrofusarin-specific pump aurT for further enzymatic processing by the extracellular complex composed of GIP1, aurF, aurO and aurS to yield aurofusarin. In Gibberella zeae (strain ATCC MYA-4620 / CBS 123657 / FGSC 9075 / NRRL 31084 / PH-1) (Wheat head blight fungus), this protein is Multicopper oxidase aurL2 (aurL2).